Reading from the N-terminus, the 399-residue chain is Tyrosine--tRNA ligase 2 (399 aa).

A 'HIGH' region motif is present at residues 41–50 (PTAPDLHLGH). The short motif at 225–229 (KMSKS) is the 'KMSKS' region element. Residue K228 participates in ATP binding. In terms of domain architecture, S4 RNA-binding spans 336 to 398 (ILIANLLKEA…GKRKFANITV (63 aa)).

It belongs to the class-I aminoacyl-tRNA synthetase family. TyrS type 2 subfamily. In terms of assembly, homodimer.

It is found in the cytoplasm. It catalyses the reaction tRNA(Tyr) + L-tyrosine + ATP = L-tyrosyl-tRNA(Tyr) + AMP + diphosphate + H(+). Functionally, catalyzes the attachment of tyrosine to tRNA(Tyr) in a two-step reaction: tyrosine is first activated by ATP to form Tyr-AMP and then transferred to the acceptor end of tRNA(Tyr). This is Tyrosine--tRNA ligase 2 from Pseudoalteromonas translucida (strain TAC 125).